A 486-amino-acid chain; its full sequence is MSIAKWRQKLNKGEVSSLELINQQINRIEEVENTLHSYLYLNHEKARASAIKIDEARAAGEELPPLAGVPFAIKDNLCTKGIPTTCSSKMLEEFIPPYESTVTQRLWKAGGILLGKTNLDEFAMGSSTETSAFGPTKNPWDITRVPGGSSGGSAAAVASGLCTAALGSDTGGSIRQPASFCGVVGLKPTYGRVSRWGLIAFASSLDQVGPFSTNVSDAAEILQVIAGHDPRDSTCLDVPVPKYSDHISESISGLRIGLIKECFDQEGLDLEVKKSVLKAADQLQSLGAELIEVSCPRFTDGIATYYVIAPSEASANLARYDGVKYGYRAKEVDNLSDMTAFTRARGFGSEVQRRILIGTYALSAGYVDAYYRKAQQVRTLIRRDFENAFKNVDILLTPTSPTTAFKSGAHQNDPLAMYLSDLLTIPANLAGLPSISLPCGFDEKALPIGLQLIANVLDETRLLQVAHQYEQAAEIMNSAPESSLIN.

Residues Lys74 and Ser149 each act as charge relay system in the active site. The active-site Acyl-ester intermediate is Ser173.

Belongs to the amidase family. GatA subfamily. As to quaternary structure, heterotrimer of A, B and C subunits.

It catalyses the reaction L-glutamyl-tRNA(Gln) + L-glutamine + ATP + H2O = L-glutaminyl-tRNA(Gln) + L-glutamate + ADP + phosphate + H(+). Its function is as follows. Allows the formation of correctly charged Gln-tRNA(Gln) through the transamidation of misacylated Glu-tRNA(Gln) in organisms which lack glutaminyl-tRNA synthetase. The reaction takes place in the presence of glutamine and ATP through an activated gamma-phospho-Glu-tRNA(Gln). The protein is Glutamyl-tRNA(Gln) amidotransferase subunit A of Prochlorococcus marinus (strain SARG / CCMP1375 / SS120).